A 382-amino-acid polypeptide reads, in one-letter code: Chaperone protein DnaJ (382 aa).

The J domain occupies 5–70; it reads DYYDLLGLSK…DKRAAYDRYG (66 aa). Residues 138 to 216 form a CR-type zinc finger; it reads GTKVPINYVT…CSGSGRVRDE (79 aa). Zn(2+) contacts are provided by C151, C154, C168, C171, C190, C193, C204, and C207. CXXCXGXG motif repeat units follow at residues 151–158, 168–175, 190–197, and 204–211; these read CSSCSGSG, CNTCHGAG, CHVCNGEG, and CKKCSGSG.

It belongs to the DnaJ family. As to quaternary structure, homodimer. It depends on Zn(2+) as a cofactor.

The protein localises to the cytoplasm. In terms of biological role, participates actively in the response to hyperosmotic and heat shock by preventing the aggregation of stress-denatured proteins and by disaggregating proteins, also in an autonomous, DnaK-independent fashion. Unfolded proteins bind initially to DnaJ; upon interaction with the DnaJ-bound protein, DnaK hydrolyzes its bound ATP, resulting in the formation of a stable complex. GrpE releases ADP from DnaK; ATP binding to DnaK triggers the release of the substrate protein, thus completing the reaction cycle. Several rounds of ATP-dependent interactions between DnaJ, DnaK and GrpE are required for fully efficient folding. Also involved, together with DnaK and GrpE, in the DNA replication of plasmids through activation of initiation proteins. The protein is Chaperone protein DnaJ of Ehrlichia ruminantium (strain Welgevonden).